The following is a 158-amino-acid chain: Arginine repressor (158 aa).

The protein belongs to the ArgR family.

Its subcellular location is the cytoplasm. It participates in amino-acid biosynthesis; L-arginine biosynthesis [regulation]. Its function is as follows. Regulates arginine biosynthesis genes. The polypeptide is Arginine repressor (Phocaeicola vulgatus (strain ATCC 8482 / DSM 1447 / JCM 5826 / CCUG 4940 / NBRC 14291 / NCTC 11154) (Bacteroides vulgatus)).